Consider the following 237-residue polypeptide: Ribose-5-phosphate isomerase A (237 aa).

Substrate-binding positions include 28-31 (SGST), 83-86 (DGAD), and 97-100 (KGRG). The active-site Proton acceptor is the Glu-106. A substrate-binding site is contributed by Lys-124.

The protein belongs to the ribose 5-phosphate isomerase family. Homodimer.

It carries out the reaction aldehydo-D-ribose 5-phosphate = D-ribulose 5-phosphate. It functions in the pathway carbohydrate degradation; pentose phosphate pathway; D-ribose 5-phosphate from D-ribulose 5-phosphate (non-oxidative stage): step 1/1. Functionally, catalyzes the reversible conversion of ribose-5-phosphate to ribulose 5-phosphate. The protein is Ribose-5-phosphate isomerase A of Thermomicrobium roseum (strain ATCC 27502 / DSM 5159 / P-2).